The following is a 334-amino-acid chain: MASKTLRVLFLGPKGTYSHQAALQQFQSTSDVEYLPAASIPQCFNQLENDTSIDYSVVPLENSTNGQVVFSYDLLRDRMIKKALSLPAPADTNRITPDIEVIAEQYVPITHCLISPIQLPNGIASLGNFEEVIIHSHPQVWGQVECYLRSMAEKFPQVTFIRLDCSSTSESVNQCIRSSTADCDNILHLAIASETAAQLHKAYIIEHSINDKLGNTTRFLVLKRRENAGDNEVEDTGLLRVNLLTFTTRQDDPGSLVDVLNILKIHSLNMCSINSRPFHLDEHDRNWRYLFFIEYYTEKNTPKNKEKFYEDISDKSKQWCLWGTFPRNERYYHK.

Residues 7–224 (RVLFLGPKGT…NTTRFLVLKR (218 aa)) enclose the Prephenate dehydratase domain. One can recognise an ACT domain in the interval 244–322 (LTFTTRQDDP…SDKSKQWCLW (79 aa)).

It is found in the cytoplasm. It catalyses the reaction prephenate + H(+) = 3-phenylpyruvate + CO2 + H2O. It participates in amino-acid biosynthesis; L-phenylalanine biosynthesis; phenylpyruvate from prephenate: step 1/1. Functionally, catayzes the decarboxylation/dehydration of prephenate to phenylpyruvate. This chain is Probable prephenate dehydratase (PHA2), found in Saccharomyces cerevisiae (strain ATCC 204508 / S288c) (Baker's yeast).